The chain runs to 63 residues: DNA gyrase inhibitor YacG (63 aa).

Residues Cys9, Cys12, Cys28, and Cys32 each contribute to the Zn(2+) site.

Belongs to the DNA gyrase inhibitor YacG family. As to quaternary structure, interacts with GyrB. Requires Zn(2+) as cofactor.

Its function is as follows. Inhibits all the catalytic activities of DNA gyrase by preventing its interaction with DNA. Acts by binding directly to the C-terminal domain of GyrB, which probably disrupts DNA binding by the gyrase. The polypeptide is DNA gyrase inhibitor YacG (Salmonella paratyphi A (strain AKU_12601)).